We begin with the raw amino-acid sequence, 513 residues long: ATP synthase subunit alpha (513 aa).

ATP is bound at residue 169-176 (GDRQTGKT).

This sequence belongs to the ATPase alpha/beta chains family. As to quaternary structure, F-type ATPases have 2 components, CF(1) - the catalytic core - and CF(0) - the membrane proton channel. CF(1) has five subunits: alpha(3), beta(3), gamma(1), delta(1), epsilon(1). CF(0) has three main subunits: a(1), b(2) and c(9-12). The alpha and beta chains form an alternating ring which encloses part of the gamma chain. CF(1) is attached to CF(0) by a central stalk formed by the gamma and epsilon chains, while a peripheral stalk is formed by the delta and b chains.

Its subcellular location is the cell inner membrane. The catalysed reaction is ATP + H2O + 4 H(+)(in) = ADP + phosphate + 5 H(+)(out). Produces ATP from ADP in the presence of a proton gradient across the membrane. The alpha chain is a regulatory subunit. This is ATP synthase subunit alpha from Ralstonia pickettii (strain 12J).